Consider the following 844-residue polypeptide: MEVPSYFDPDYDPSSLRVVDLRNILTEYQIYYPSTAKKAQLITLFSKLRRAKNGLISMTELQQKNVPPSSRSPRRRVAGVTNNVTARISSKRKINMVDEANDTEISKTSQFEDNVMGMLQDENVQVLNTNTITISEESEFHASKIAKIDSRNEEITHIPFETQTELNAAVVNLDNSMESSFSIVQNLTNKDSSVDTATYDFSAEVGNIVTPASKFLDYDQSYLVNASVSGDPTPVKVLNTTSPKSENPLNQSSFLSFLGENLKPKFTSRSSSVYASPIKSSLNSLECNPSNLLSVRKNFQQSSDSYLKSNKSFDQLNNLVGLSTGNSENFTPENNSFSWTHPKKNSSSPLPQSQSSSIFVEHLNQLYEANASIHRPVNPAFSTNFGLEASNTSTPEKKKFDSQKPDDDSVNEISSDLGLSTTGIDRVEENISLTKDRQPKRPYFSLGSFISLIFSFTKVVNSLWLVLLVVPLLGFVGFWHQEVQRVGFCGVPAEPYPSSLYYLQPGVLRSSIESAYSFAHSLGIEASCQPCPENAECGFNRQLFCKEGLKASFPLLADFGLKPYPRCIPNTVKVNKVEEMVQAFMSIIGKWYYKAPKEFATFESAKNLNGKSFVDNFKDRYYMYKQDIDNVVGLKDFKVYLKTTLNRLYNSKLTRKVLYYLFSPLFTLELWKLRVRGALSKFPTNCLRSVYSHTVSLMKYLTSAVISCWRIYLLIGILAAITGTVVWRIRVYAKKHVVKHGVSVCVSHCIAKLQKTKLKSLTDFSVNPRVEVVQLRSDCFVSGVADDKGLFELVHLPLSIQLEIWEKVVSVLEGMVSVKVWDSERLAKNRAWEWIGVFSDDIAL.

Disordered stretches follow at residues Glu-333–Gln-354 and Asn-384–Ser-415. A compositionally biased stretch (polar residues) spans Asn-384 to Thr-394. A compositionally biased stretch (basic and acidic residues) spans Pro-395–Asp-407. Residues Val-459–Trp-479 traverse the membrane as a helical segment. Residue Ala-605–Ser-612 coordinates ATP. A helical transmembrane segment spans residues Val-705–Val-725.

In terms of assembly, interacts with sad1.

The protein resides in the endoplasmic reticulum membrane. Its subcellular location is the nucleus membrane. Its function is as follows. Required for correct meiotic chromosome segregation. This Schizosaccharomyces pombe (strain 972 / ATCC 24843) (Fission yeast) protein is Meiotically up-regulated gene 61 protein (mug61).